Reading from the N-terminus, the 572-residue chain is Formate--tetrahydrofolate ligase (572 aa).

81–88 (TPAGEGKT) provides a ligand contact to ATP.

This sequence belongs to the formate--tetrahydrofolate ligase family.

The catalysed reaction is (6S)-5,6,7,8-tetrahydrofolate + formate + ATP = (6R)-10-formyltetrahydrofolate + ADP + phosphate. The protein operates within one-carbon metabolism; tetrahydrofolate interconversion. This is Formate--tetrahydrofolate ligase from Granulibacter bethesdensis (strain ATCC BAA-1260 / CGDNIH1).